A 364-amino-acid chain; its full sequence is C3a anaphylatoxin chemotactic receptor (364 aa).

The Extracellular portion of the chain corresponds to 1 to 50; that stretch reads MGDNMDFSEHYGNFSENYVTESYGEFDLYYDPLNETSLSEQGHRSIWVLS. Residues Asn-13 and Asn-34 are each glycosylated (N-linked (GlcNAc...) asparagine). A helical transmembrane segment spans residues 51-71; it reads IVLCSIACVLGITGNAFVIWI. Residues 72–82 are Cytoplasmic-facing; sequence AGVKMKRTVNT. The helical transmembrane segment at 83–103 threads the bilayer; sequence IWFVNLAAADLLCCVSIPFSI. Over 104–120 the chain is Extracellular; it reads ADIILNSHWPYGEAMCK. A disulfide bridge links Cys-119 with Cys-198. The chain crosses the membrane as a helical span at residues 121–141; it reads ILPSMVVLNMFASVFTLVLIS. Over 142–159 the chain is Cytoplasmic; the sequence is LDRFALVILPVWAQNHRS. A helical transmembrane segment spans residues 160–180; that stretch reads ITLAWLLCGLVWVLGLLLSLP. Over 181–220 the chain is Extracellular; the sequence is SMIYREIVVHDDMNITLCIYNHLQDKTEGNQSAIKAIHVT. A helical transmembrane segment spans residues 221 to 241; that stretch reads RLILGFLIPLLVIAVCYLLIG. Residues 242–256 are Cytoplasmic-facing; that stretch reads RRVSSGRFKSQRAFQ. The helical transmembrane segment at 257-277 threads the bilayer; sequence IILVVVTTFFVCWLPYHVIGL. At 278–295 the chain is on the extracellular side; it reads VIEYGKEASQVMARALDP. The helical transmembrane segment at 296 to 316 threads the bilayer; the sequence is LAISLAYVNSCLNPVLYVFMG. Residues 317 to 364 are Cytoplasmic-facing; sequence QDFKERVRVSLRKIFEKVFSEDVTLRSSVYSKGQSQLSRATNSSEAQV.

This sequence belongs to the G-protein coupled receptor 1 family.

Its subcellular location is the cell membrane. In terms of biological role, receptor for the chemotactic and inflammatory peptide anaphylatoxin C3a. This receptor stimulates chemotaxis, granule enzyme release and superoxide anion production. This is C3a anaphylatoxin chemotactic receptor (c3ar1) from Oncorhynchus mykiss (Rainbow trout).